A 118-amino-acid polypeptide reads, in one-letter code: Cycloviolacin-O11 (118 aa).

The signal sequence occupies residues 1-22 (MEMKNMVVGLFLIAAFALPALA). Residues 23-84 (TSFEKDFITH…THSNSINALG (62 aa)) constitute a propeptide that is removed on maturation. A cross-link (cyclopeptide (Gly-Asn)) is located at residues 85 to 115 (GTLPCGESCVWIPCISAVVGCSCKSKVCYKN). Disulfide bonds link cysteine 89-cysteine 105, cysteine 93-cysteine 107, and cysteine 98-cysteine 112. A propeptide spanning residues 116–118 (SLA) is cleaved from the precursor.

Post-translationally, cycloviolacin-O11 is a cyclic peptide. Expressed in leaves, petals and petioles but not in roots and runners (at protein level).

Its function is as follows. Probably participates in a plant defense mechanism. The polypeptide is Cycloviolacin-O11 (Voc2) (Viola odorata (Sweet violet)).